The chain runs to 593 residues: Aspartate--tRNA ligase (593 aa).

Glu-173 serves as a coordination point for L-aspartate. The segment at 197 to 200 (QLFK) is aspartate. Arg-219 contacts L-aspartate. ATP contacts are provided by residues 219–221 (RDE) and Gln-228. Residue His-448 participates in L-aspartate binding. Glu-482 provides a ligand contact to ATP. Position 489 (Arg-489) interacts with L-aspartate. 534 to 537 (GLDR) contacts ATP.

Belongs to the class-II aminoacyl-tRNA synthetase family. Type 1 subfamily. Homodimer.

It is found in the cytoplasm. It carries out the reaction tRNA(Asp) + L-aspartate + ATP = L-aspartyl-tRNA(Asp) + AMP + diphosphate. Functionally, catalyzes the attachment of L-aspartate to tRNA(Asp) in a two-step reaction: L-aspartate is first activated by ATP to form Asp-AMP and then transferred to the acceptor end of tRNA(Asp). This is Aspartate--tRNA ligase from Shewanella denitrificans (strain OS217 / ATCC BAA-1090 / DSM 15013).